A 265-amino-acid chain; its full sequence is UDP-N-acetylenolpyruvoylglucosamine reductase (265 aa).

The FAD-binding PCMH-type domain maps to 15–169 (GVGGPAELWT…TRVRLKLKER (155 aa)). Residue Arg-149 is part of the active site. The segment at 182–203 (DRARKGQPKRKSAGCAFKNPPG) is disordered. Cys-196 serves as the catalytic Proton donor.

The protein belongs to the MurB family. It depends on FAD as a cofactor.

Its subcellular location is the cytoplasm. It catalyses the reaction UDP-N-acetyl-alpha-D-muramate + NADP(+) = UDP-N-acetyl-3-O-(1-carboxyvinyl)-alpha-D-glucosamine + NADPH + H(+). It functions in the pathway cell wall biogenesis; peptidoglycan biosynthesis. Cell wall formation. The chain is UDP-N-acetylenolpyruvoylglucosamine reductase from Thermus thermophilus (strain ATCC 27634 / DSM 579 / HB8).